The chain runs to 264 residues: Indole-3-glycerol phosphate synthase (264 aa).

It belongs to the TrpC family.

It carries out the reaction 1-(2-carboxyphenylamino)-1-deoxy-D-ribulose 5-phosphate + H(+) = (1S,2R)-1-C-(indol-3-yl)glycerol 3-phosphate + CO2 + H2O. Its pathway is amino-acid biosynthesis; L-tryptophan biosynthesis; L-tryptophan from chorismate: step 4/5. The sequence is that of Indole-3-glycerol phosphate synthase from Xylella fastidiosa (strain M23).